A 451-amino-acid chain; its full sequence is Chromosomal replication initiator protein DnaA (451 aa).

A domain I, interacts with DnaA modulators region spans residues 1-71; sequence MSEKEIWDKV…QAIIYDVIGY (71 aa). Residues 71–112 are domain II; sequence YEVKPHFISEDELASYNNVNTQEVQEPQVQHSSIDDKTWGKE. The tract at residues 113–329 is domain III, AAA+ region; that stretch reads QFNMHNTFDT…GALTRLLAYS (217 aa). Glycine 157, glycine 159, lysine 160, and threonine 161 together coordinate ATP. The domain IV, binds dsDNA stretch occupies residues 330-451; the sequence is KLQGKPITTE…ENLEKEIRNQ (122 aa).

Belongs to the DnaA family. As to quaternary structure, oligomerizes as a right-handed, spiral filament on DNA at oriC.

The protein resides in the cytoplasm. Functionally, plays an essential role in the initiation and regulation of chromosomal replication. ATP-DnaA binds to the origin of replication (oriC) to initiate formation of the DNA replication initiation complex once per cell cycle. Binds the DnaA box (a 9 base pair repeat at the origin) and separates the double-stranded (ds)DNA. Forms a right-handed helical filament on oriC DNA; dsDNA binds to the exterior of the filament while single-stranded (ss)DNA is stabiized in the filament's interior. The ATP-DnaA-oriC complex binds and stabilizes one strand of the AT-rich DNA unwinding element (DUE), permitting loading of DNA polymerase. After initiation quickly degrades to an ADP-DnaA complex that is not apt for DNA replication. Binds acidic phospholipids. The polypeptide is Chromosomal replication initiator protein DnaA (Staphylococcus epidermidis (strain ATCC 12228 / FDA PCI 1200)).